Here is a 184-residue protein sequence, read N- to C-terminus: ATP synthase subunit b (184 aa).

A helical membrane pass occupies residues leucine 4–serine 24.

It belongs to the ATPase B chain family. In terms of assembly, F-type ATPases have 2 components, F(1) - the catalytic core - and F(0) - the membrane proton channel. F(1) has five subunits: alpha(3), beta(3), gamma(1), delta(1), epsilon(1). F(0) has three main subunits: a(1), b(2) and c(10-14). The alpha and beta chains form an alternating ring which encloses part of the gamma chain. F(1) is attached to F(0) by a central stalk formed by the gamma and epsilon chains, while a peripheral stalk is formed by the delta and b chains.

The protein localises to the cell inner membrane. Its function is as follows. F(1)F(0) ATP synthase produces ATP from ADP in the presence of a proton or sodium gradient. F-type ATPases consist of two structural domains, F(1) containing the extramembraneous catalytic core and F(0) containing the membrane proton channel, linked together by a central stalk and a peripheral stalk. During catalysis, ATP synthesis in the catalytic domain of F(1) is coupled via a rotary mechanism of the central stalk subunits to proton translocation. In terms of biological role, component of the F(0) channel, it forms part of the peripheral stalk, linking F(1) to F(0). The sequence is that of ATP synthase subunit b from Paracoccus denitrificans (strain Pd 1222).